The following is a 482-amino-acid chain: Methylenetetrahydrofolate--tRNA-(uracil-5-)-methyltransferase TrmFO (482 aa).

FAD is bound at residue 20-25; the sequence is GGGLAG.

It belongs to the MnmG family. TrmFO subfamily. Requires FAD as cofactor.

The protein resides in the cytoplasm. The enzyme catalyses uridine(54) in tRNA + (6R)-5,10-methylene-5,6,7,8-tetrahydrofolate + NADH + H(+) = 5-methyluridine(54) in tRNA + (6S)-5,6,7,8-tetrahydrofolate + NAD(+). It carries out the reaction uridine(54) in tRNA + (6R)-5,10-methylene-5,6,7,8-tetrahydrofolate + NADPH + H(+) = 5-methyluridine(54) in tRNA + (6S)-5,6,7,8-tetrahydrofolate + NADP(+). Its function is as follows. Catalyzes the folate-dependent formation of 5-methyl-uridine at position 54 (M-5-U54) in all tRNAs. In Rhodopseudomonas palustris (strain HaA2), this protein is Methylenetetrahydrofolate--tRNA-(uracil-5-)-methyltransferase TrmFO.